We begin with the raw amino-acid sequence, 321 residues long: Mas-related G-protein coupled receptor member H (321 aa).

At 1-35 the chain is on the extracellular side; that stretch reads MEPLATTLCPQECTQTTRNETPNETTWSSEHVTKY. Residue N23 is glycosylated (N-linked (GlcNAc...) asparagine). A helical transmembrane segment spans residues 36–56; that stretch reads TYISISLVICSLGLVGNGLLI. Residues 57–71 are Cytoplasmic-facing; the sequence is WFLIFCIKRKPFTIY. A helical transmembrane segment spans residues 72–92; the sequence is ILHLAFADFMVLLCSSIIQLV. Residues 93–102 lie on the Extracellular side of the membrane; that stretch reads NTFHIYDSTL. Residues 103–126 traverse the membrane as a helical segment; sequence VSYAVLFMIFGYNTGLHLLTAISV. The Cytoplasmic portion of the chain corresponds to 127–147; that stretch reads ERCLSVLYPIWYHCRRPKHQS. The chain crosses the membrane as a helical span at residues 148–168; that stretch reads TVACTLLWALSVLVSGLENFF. Over 169–188 the chain is Extracellular; it reads CILEVKPQFPECRYVYIFSC. The helical transmembrane segment at 189–209 threads the bilayer; the sequence is TLTFLVFVPLMVFSNLILFIQ. Topologically, residues 210–225 are cytoplasmic; the sequence is VCCNLKPRQPAKLYVI. Residues 226–246 form a helical membrane-spanning segment; that stretch reads IMATVILFLVFAMPMKVLLII. Position 247 (G247) is a topological domain, extracellular. The helical transmembrane segment at 248 to 271 threads the bilayer; it reads YYSNSTDASVWKSLPYLNMLSTIN. Residues 272-320 lie on the Cytoplasmic side of the membrane; it reads CSINPIVYFVVGSLRRKRSRKSLKEALQKVFEEKPVVASRENEVQFSLP.

This sequence belongs to the G-protein coupled receptor 1 family. Mas subfamily.

It localises to the cell membrane. Orphan receptor. May regulate nociceptor function and/or development, including the sensation or modulation of pain. The sequence is that of Mas-related G-protein coupled receptor member H (Mrgprh) from Rattus norvegicus (Rat).